The sequence spans 681 residues: Hydroxyproline O-galactosyltransferase GALT6 (681 aa).

Residues Met1–Gln28 lie on the Cytoplasmic side of the membrane. A helical; Signal-anchor for type II membrane protein membrane pass occupies residues Ile29–Phe49. Over Lys50–Arg681 the chain is Lumenal. Residues Ser57–Thr80 are disordered. Residues Thr62–Ala78 show a composition bias toward basic and acidic residues. The region spanning Asn187–Gly401 is the Galectin domain. A glycan (N-linked (GlcNAc...) asparagine) is linked at Asn629.

This sequence belongs to the glycosyltransferase 31 family. The cofactor is Mn(2+). Expressed in junveile leaves and stems, and at lower levels in cauline leaves and siliques.

Its subcellular location is the golgi apparatus membrane. It functions in the pathway protein modification; protein glycosylation. Functionally, possesses hydroxyproline O-galactosyltransferase activity. Transfers galactose from UDP-galactose to hydroxyproline residues in the arabinogalactan proteins (AGPs). Is specific for AGPs containing non-contiguous peptidyl hydroxyproline residues. Utilizes UDP-galactose solely as sugar donor. The addition of galactose onto the peptidyl hydroxyproline residues in AGP core proteins represents the first committed step in arabinogalactan polysaccharide addition. AGP glycans play essential roles in both vegetative and reproductive plant growth. In Arabidopsis thaliana (Mouse-ear cress), this protein is Hydroxyproline O-galactosyltransferase GALT6.